Consider the following 192-residue polypeptide: MAAIRKKLVIVGDGACGKTCLLIVFSKDQFPEVYVPTVFENYVADIEVDGKQVELALWDTAGQEDYDRLRPLSYPDTDVILMCFSIDSPDSLENIPEKWTPEVKHFCPNIPIILVGNKKTAGDEHTRRELAKMKQEPVKPDDAKEMGSRIKAFGYLECSAKTKEGVREVFELASRAALQAKKTKSKSPCLLL.

Residue glycine 12–threonine 19 coordinates GTP. Positions tyrosine 34–tyrosine 42 match the Effector region motif. GTP contacts are provided by residues aspartate 59–glutamine 63 and asparagine 117–threonine 120. Cysteine 189 is subject to Cysteine methyl ester. Cysteine 189 carries S-geranylgeranyl cysteine lipidation. Residues leucine 190–leucine 192 constitute a propeptide, removed in mature form.

The protein belongs to the small GTPase superfamily. Rho family.

It localises to the cell membrane. The chain is Ras-like GTP-binding protein O-RHO from Diplobatis ommata (Ocellated electric ray).